The following is a 262-amino-acid chain: Cytochrome c oxidase subunit 3 (262 aa).

7 helical membrane passes run 16-36 (PWPL…VQWF), 42-59 (TLFL…YQWW), 83-103 (GMIL…WAFF), 128-148 (FQIP…VTWA), 163-183 (SLFF…YEYI), 198-218 (FFVA…FLLI), and 240-260 (AWYW…IYWW).

This sequence belongs to the cytochrome c oxidase subunit 3 family. As to quaternary structure, component of the cytochrome c oxidase (complex IV, CIV), a multisubunit enzyme composed of a catalytic core of 3 subunits and several supernumerary subunits. The complex exists as a monomer or a dimer and forms supercomplexes (SCs) in the inner mitochondrial membrane with ubiquinol-cytochrome c oxidoreductase (cytochrome b-c1 complex, complex III, CIII).

The protein localises to the mitochondrion inner membrane. It carries out the reaction 4 Fe(II)-[cytochrome c] + O2 + 8 H(+)(in) = 4 Fe(III)-[cytochrome c] + 2 H2O + 4 H(+)(out). Functionally, component of the cytochrome c oxidase, the last enzyme in the mitochondrial electron transport chain which drives oxidative phosphorylation. The respiratory chain contains 3 multisubunit complexes succinate dehydrogenase (complex II, CII), ubiquinol-cytochrome c oxidoreductase (cytochrome b-c1 complex, complex III, CIII) and cytochrome c oxidase (complex IV, CIV), that cooperate to transfer electrons derived from NADH and succinate to molecular oxygen, creating an electrochemical gradient over the inner membrane that drives transmembrane transport and the ATP synthase. Cytochrome c oxidase is the component of the respiratory chain that catalyzes the reduction of oxygen to water. Electrons originating from reduced cytochrome c in the intermembrane space (IMS) are transferred via the dinuclear copper A center (CU(A)) of subunit 2 and heme A of subunit 1 to the active site in subunit 1, a binuclear center (BNC) formed by heme A3 and copper B (CU(B)). The BNC reduces molecular oxygen to 2 water molecules using 4 electrons from cytochrome c in the IMS and 4 protons from the mitochondrial matrix. The sequence is that of Cytochrome c oxidase subunit 3 from Aedes aegypti (Yellowfever mosquito).